Consider the following 317-residue polypeptide: Putative HTH-type transcriptional regulatory protein Mboo_0195 (317 aa).

The region spanning 132–185 is the HTH cro/C1-type domain; sequence LRELRERRSMSLGDLGQVLGVSRRTISKYESGMGTTLEVAIRIEEYFNTGVVES. A DNA-binding region (H-T-H motif) is located at residues 143 to 162; the sequence is LGDLGQVLGVSRRTISKYES.

The protein is Putative HTH-type transcriptional regulatory protein Mboo_0195 of Methanoregula boonei (strain DSM 21154 / JCM 14090 / 6A8).